The chain runs to 1137 residues: MSLQSAQYLRQAEVLKADMTDSKLGPAEVWTSRQALQDLYQKMLVTDLEYALDKKVEQDLWNHAFKNQITTLQGQAKNRANPNRSEVQANLSLFLEAASGFYTQLLQELCTVFNVDLPCRVKSSQLGIISNKQTHTSAIVKPQSSSCSYICQHCLVHLGDIARYRNQTSQAESYYRHAAQLVPSNGQPYNQLAILASSKGDHLTTIFYYCRSIAVKFPFPAASTNLQKALSKALESRDEVKTKWGVSDFIKAFIKFHGHVYLSKSLEKLSPLREKLEEQFKRLLFQKAFNSQQLVHVTVINLFQLHHLRDFSNETEQHTYSQDEQLCWTQLLALFMSFLGILCKCPLQNESQEESYNAYPLPAVKVSMDWLRLRPRVFQEAVVDERQYIWPWLISLLNSFHPHEEDLSSISATPLPEEFELQGFLALRPSFRNLDFSKGHQGITGDKEGQQRRIRQQRLISIGKWIADNQPRLIQCENEVGKLLFITEIPELILEDPSEAKENLILQETSVIESLAADGSPGLKSVLSTSRNLSNNCDTGEKPVVTFKENIKTREVNRDQGRSFPPKEVRRDYSKGITVTKNDGKKDNNKRKTETKKCTLEKLQETGKQNVAVQVKSQTELRKTPVSEARKTPVTQTPTQASNSQFIPIHHPGAFPPLPSRPGFPPPTYVIPPPVAFSMGSGYTFPAGVSVPGTFLQPTAHSPAGNQVQAGKQSHIPYSQQRPSGPGPMNQGPQQSQPPSQQPLTSLPAQPTAQSTSQLQVQALTQQQQSPTKAVPALGKSPPHHSGFQQYQQADASKQLWNPPQVQGPLGKIMPVKQPYYLQTQDPIKLFEPSLQPPVMQQQPLEKKMKPFPMEPYNHNPSEVKVPEFYWDSSYSMADNRSVMAQQANIDRRGKRSPGVFRPEQDPVPRMPFEKSLLEKPSELMSHSSSFLSLTGFSLNQERYPNNSMFNEVYGKNLTSSSKAELSPSMAPQETSLYSLFEGTPWSPSLPASSDHSTPASQSPHSSNPSSLPSSPPTHNHNSVPFSNFGPIGTPDNRDRRTADRWKTDKPAMGGFGIDYLSATSSSESSWHQASTPSGTWTGHGPSMEDSSAVLMESLKSIWSSSMMHPGPSALEQLLMQQKQKQQRGQGTMNPPH.

S2 carries the post-translational modification N-acetylserine. TPR repeat units lie at residues 152-185 (QHCL…VPSN) and 187-219 (QPYN…KFPF). Residue S520 is modified to Phosphoserine. The segment covering 620-631 (ELRKTPVSEARK) has biased composition (basic and acidic residues). Disordered regions lie at residues 620–646 (ELRK…NSQF), 696–794 (LQPT…YQQA), 890–911 (IDRR…VPRM), 988–1055 (PSLP…AMGG), 1069–1089 (SSWH…PSME), and 1104–1137 (SSSM…NPPH). T624 is modified (phosphothreonine). Polar residues-rich tracts occupy residues 633–646 (PVTQ…NSQF) and 696–722 (LQPT…SQQR). The segment covering 723–770 (PSGPGPMNQGPQQSQPPSQQPLTSLPAQPTAQSTSQLQVQALTQQQQS) has biased composition (low complexity). 2 positions are modified to phosphoserine: S781 and S897. A compositionally biased stretch (polar residues) spans 988-998 (PSLPASSDHST). The segment covering 999-1025 (PASQSPHSSNPSSLPSSPPTHNHNSVP) has biased composition (low complexity). The span at 1036 to 1050 (DNRDRRTADRWKTDK) shows a compositional bias: basic and acidic residues. Residues 1069–1081 (SSWHQASTPSGTW) are compositionally biased toward polar residues. Positions 1117–1131 (QLLMQQKQKQQRGQG) are enriched in low complexity.

In terms of assembly, part of a complex that contains SMG5, SMG7, PPP2CA, a short isoform of UPF3A (isoform UPF3AS, but not isoform UPF3AL) and phosphorylated UPF1. Interacts with DHX34; the interaction is RNA-independent.

It is found in the cytoplasm. The protein localises to the nucleus. In terms of biological role, plays a role in nonsense-mediated mRNA decay. Recruits UPF1 to cytoplasmic mRNA decay bodies. Together with SMG5 is thought to provide a link to the mRNA degradation machinery involving exonucleolytic pathways, and to serve as an adapter for UPF1 to protein phosphatase 2A (PP2A), thereby triggering UPF1 dephosphorylation. The protein is Nonsense-mediated mRNA decay factor SMG7 of Homo sapiens (Human).